The chain runs to 201 residues: Recombination protein RecR (201 aa).

The C4-type zinc finger occupies 60-75 (CSECGNMDVSDPCTVC). The region spanning 83–178 (AAICVVETVG…SITSLARGVP (96 aa)) is the Toprim domain.

It belongs to the RecR family.

In terms of biological role, may play a role in DNA repair. It seems to be involved in an RecBC-independent recombinational process of DNA repair. It may act with RecF and RecO. This is Recombination protein RecR from Maricaulis maris (strain MCS10) (Caulobacter maris).